The sequence spans 431 residues: Histidine--tRNA ligase (431 aa).

This sequence belongs to the class-II aminoacyl-tRNA synthetase family.

Its subcellular location is the cytoplasm. It carries out the reaction tRNA(His) + L-histidine + ATP = L-histidyl-tRNA(His) + AMP + diphosphate + H(+). The polypeptide is Histidine--tRNA ligase (hisS) (Pyrococcus abyssi (strain GE5 / Orsay)).